Here is a 386-residue protein sequence, read N- to C-terminus: S-adenosylmethionine synthase (386 aa).

ATP is bound at residue His-16. A Mg(2+)-binding site is contributed by Asp-18. Residue Glu-44 coordinates K(+). Glu-57 and Gln-100 together coordinate L-methionine. Residues 100-110 (QSRDITQGVDR) form a flexible loop region. ATP contacts are provided by residues 165 to 167 (DAK), Asp-240, 246 to 247 (RK), Ala-263, and Lys-267. An L-methionine-binding site is contributed by Asp-240. Residue Lys-271 coordinates L-methionine.

Belongs to the AdoMet synthase family. As to quaternary structure, homotetramer; dimer of dimers. The cofactor is Mg(2+). K(+) serves as cofactor.

It is found in the cytoplasm. It catalyses the reaction L-methionine + ATP + H2O = S-adenosyl-L-methionine + phosphate + diphosphate. It functions in the pathway amino-acid biosynthesis; S-adenosyl-L-methionine biosynthesis; S-adenosyl-L-methionine from L-methionine: step 1/1. Its function is as follows. Catalyzes the formation of S-adenosylmethionine (AdoMet) from methionine and ATP. The overall synthetic reaction is composed of two sequential steps, AdoMet formation and the subsequent tripolyphosphate hydrolysis which occurs prior to release of AdoMet from the enzyme. In Francisella tularensis subsp. tularensis (strain WY96-3418), this protein is S-adenosylmethionine synthase.